The sequence spans 362 residues: Severin (362 aa).

The stretch at 53-102 (FKVVPVPESSYGKFYDGDSYIILHTFKEGNSLKHDIHFFLGTFTTQDEAG) is one Gelsolin-like 1 repeat. 162–170 (RLLHISGDK) is a binding site for a 1,2-diacyl-sn-glycero-3-phospho-(1D-myo-inositol-4,5-bisphosphate). Gelsolin-like repeat units lie at residues 172–212 (AKVA…QEKN) and 280–323 (LKFS…NEKK).

It belongs to the villin/gelsolin family.

Functionally, severin blocks the ends of F-actin and causes the fragmentation and depolymerization of actin filaments in a Ca(2+) dependent manner. The chain is Severin (sevA) from Dictyostelium discoideum (Social amoeba).